The primary structure comprises 128 residues: Large ribosomal subunit protein bL20 (128 aa).

The protein belongs to the bacterial ribosomal protein bL20 family.

In terms of biological role, binds directly to 23S ribosomal RNA and is necessary for the in vitro assembly process of the 50S ribosomal subunit. It is not involved in the protein synthesizing functions of that subunit. This is Large ribosomal subunit protein bL20 from Anaplasma phagocytophilum (strain HZ).